The chain runs to 160 residues: Large ribosomal subunit protein bL9 (160 aa).

The protein belongs to the bacterial ribosomal protein bL9 family.

Its function is as follows. Binds to the 23S rRNA. This is Large ribosomal subunit protein bL9 from Neorickettsia sennetsu (strain ATCC VR-367 / Miyayama) (Ehrlichia sennetsu).